Reading from the N-terminus, the 372-residue chain is Heat-inducible transcription repressor HrcA (372 aa).

The protein belongs to the HrcA family.

Its function is as follows. Negative regulator of class I heat shock genes (grpE-dnaK-dnaJ and groELS operons). Prevents heat-shock induction of these operons. The protein is Heat-inducible transcription repressor HrcA of Chloroflexus aurantiacus (strain ATCC 29366 / DSM 635 / J-10-fl).